The primary structure comprises 451 residues: BSD domain-containing protein 1 (451 aa).

Positions 146–198 (WLSRFSLEEKKGEIAELLATSPSIRALYTKMVPAAVSHSEFWQRYFYKVHRLE) constitute a BSD domain. 2 disordered regions span residues 252–296 (SAAL…SLVT) and 309–424 (LQTG…DLDM). The segment covering 275-295 (PPELAPAEGSPSESSESVSLV) has biased composition (low complexity). Polar residues predominate over residues 309 to 320 (LQTGVQPSGNRD). The segment covering 365–388 (KEVESKAQGRTETLKEEGPTDLRV) has biased composition (basic and acidic residues). Polar residues predominate over residues 392-411 (NSDSGKSTPSNNGKKGSSTD). Residues 412-424 (ISEDWEKDFDLDM) are compositionally biased toward acidic residues.

This chain is BSD domain-containing protein 1 (BSDC1), found in Gallus gallus (Chicken).